A 396-amino-acid polypeptide reads, in one-letter code: Elongation factor Tu (396 aa).

The 196-residue stretch at 10-205 (KPHVNIGTIG…ACDESIPDPE (196 aa)) folds into the tr-type G domain. The segment at 19-26 (GHVDHGKT) is G1. 19-26 (GHVDHGKT) contributes to the GTP binding site. Thr-26 lines the Mg(2+) pocket. The G2 stretch occupies residues 62–66 (GITIN). Residues 83–86 (DAPG) form a G3 region. Residues 83–87 (DAPGH) and 138–141 (NKCD) contribute to the GTP site. The segment at 138 to 141 (NKCD) is G4. Positions 175–177 (SAL) are G5.

It belongs to the TRAFAC class translation factor GTPase superfamily. Classic translation factor GTPase family. EF-Tu/EF-1A subfamily. As to quaternary structure, monomer.

Its subcellular location is the cytoplasm. The catalysed reaction is GTP + H2O = GDP + phosphate + H(+). GTP hydrolase that promotes the GTP-dependent binding of aminoacyl-tRNA to the A-site of ribosomes during protein biosynthesis. The sequence is that of Elongation factor Tu from Corynebacterium jeikeium (strain K411).